Consider the following 434-residue polypeptide: Adenylosuccinate synthetase (434 aa).

GTP-binding positions include 22–28 (GDEGKGK) and 50–52 (GHT). Asp23 functions as the Proton acceptor in the catalytic mechanism. Mg(2+) contacts are provided by Asp23 and Gly50. IMP-binding positions include 23–26 (DEGK), 48–51 (NAGH), Thr139, Arg153, Gln234, Thr249, and Arg313. The active-site Proton donor is His51. Residue 309-315 (ATTGRKR) coordinates substrate. Residues Arg315, 341–343 (KLD), and 423–425 (SVG) contribute to the GTP site.

This sequence belongs to the adenylosuccinate synthetase family. In terms of assembly, homodimer. Mg(2+) is required as a cofactor.

The protein resides in the cytoplasm. The enzyme catalyses IMP + L-aspartate + GTP = N(6)-(1,2-dicarboxyethyl)-AMP + GDP + phosphate + 2 H(+). The protein operates within purine metabolism; AMP biosynthesis via de novo pathway; AMP from IMP: step 1/2. Functionally, plays an important role in the de novo pathway of purine nucleotide biosynthesis. Catalyzes the first committed step in the biosynthesis of AMP from IMP. The protein is Adenylosuccinate synthetase of Chlorobium phaeovibrioides (strain DSM 265 / 1930) (Prosthecochloris vibrioformis (strain DSM 265)).